The chain runs to 427 residues: Serine--tRNA ligase (427 aa).

Residue 235–237 coordinates L-serine; the sequence is TAE. ATP is bound by residues 266–268 and valine 282; that span reads RRE. L-serine is bound at residue glutamate 289. Position 353 to 356 (353 to 356) interacts with ATP; that stretch reads EASS. Serine 389 lines the L-serine pocket.

This sequence belongs to the class-II aminoacyl-tRNA synthetase family. Type-1 seryl-tRNA synthetase subfamily. In terms of assembly, homodimer. The tRNA molecule binds across the dimer.

The protein resides in the cytoplasm. It catalyses the reaction tRNA(Ser) + L-serine + ATP = L-seryl-tRNA(Ser) + AMP + diphosphate + H(+). The enzyme catalyses tRNA(Sec) + L-serine + ATP = L-seryl-tRNA(Sec) + AMP + diphosphate + H(+). It functions in the pathway aminoacyl-tRNA biosynthesis; selenocysteinyl-tRNA(Sec) biosynthesis; L-seryl-tRNA(Sec) from L-serine and tRNA(Sec): step 1/1. Its function is as follows. Catalyzes the attachment of serine to tRNA(Ser). Is also able to aminoacylate tRNA(Sec) with serine, to form the misacylated tRNA L-seryl-tRNA(Sec), which will be further converted into selenocysteinyl-tRNA(Sec). The sequence is that of Serine--tRNA ligase from Chlorobaculum parvum (strain DSM 263 / NCIMB 8327) (Chlorobium vibrioforme subsp. thiosulfatophilum).